The primary structure comprises 67 residues: Small, acid-soluble spore protein 2 (67 aa).

This sequence belongs to the alpha/beta-type SASP family.

Its function is as follows. SASP are bound to spore DNA. They are double-stranded DNA-binding proteins that cause DNA to change to an a-like conformation. They protect the DNA backbone from chemical and enzymatic cleavage and are thus involved in dormant spore's high resistance to UV light. In Sporosarcina ureae, this protein is Small, acid-soluble spore protein 2 (Su-2).